The chain runs to 265 residues: MQKINFFDTINNIWRKMLDKICQLARSAGHCIMKLYNSQKFINVSYKPDNTPITDVDYAANNIIKKGLSLISPQIPIISEEESYNFEICRNWNSYWLVDPLDGTKEFLKKNGEFTVNISLIEYGVPILGVIYAPFFDVLYSAFYDNAWKEEKFGSKKKINVAQAEAPLLVISRSHPNETLKNYLEKIKCCKIKKMGSSLKFCLIAEGTAQIYPRFGDTHIWDTAAGHAIVIAAGGKVQTWTGGNLNYSLSSRVSFINSGFYASAL.

Positions 80, 99, 101, 102, and 222 each coordinate Mg(2+). Glu-80 is a binding site for substrate. Residues 101-104 (LDGT) and Asp-222 contribute to the substrate site.

The protein belongs to the inositol monophosphatase superfamily. CysQ family. Mg(2+) serves as cofactor.

The protein resides in the cell inner membrane. It carries out the reaction adenosine 3',5'-bisphosphate + H2O = AMP + phosphate. In terms of biological role, converts adenosine-3',5'-bisphosphate (PAP) to AMP. The protein is 3'(2'),5'-bisphosphate nucleotidase CysQ of Buchnera aphidicola subsp. Acyrthosiphon pisum (strain APS) (Acyrthosiphon pisum symbiotic bacterium).